The following is a 377-amino-acid chain: Flagellar P-ring protein (377 aa).

Positions 1–33 (MRYPVSTGIAAPAWFAFFCAWAGLWTFSLPVQA) are cleaved as a signal peptide.

It belongs to the FlgI family. In terms of assembly, the basal body constitutes a major portion of the flagellar organelle and consists of four rings (L,P,S, and M) mounted on a central rod.

It is found in the periplasm. Its subcellular location is the bacterial flagellum basal body. Functionally, assembles around the rod to form the L-ring and probably protects the motor/basal body from shearing forces during rotation. The sequence is that of Flagellar P-ring protein from Nitrosospira multiformis (strain ATCC 25196 / NCIMB 11849 / C 71).